The sequence spans 136 residues: Nucleoside diphosphate kinase (136 aa).

The ATP site is built by Lys-10, Phe-58, Arg-86, Thr-92, Arg-104, and Asn-114. His-117 (pros-phosphohistidine intermediate) is an active-site residue.

Belongs to the NDK family. In terms of assembly, homotetramer. Mg(2+) serves as cofactor.

The protein resides in the cytoplasm. It carries out the reaction a 2'-deoxyribonucleoside 5'-diphosphate + ATP = a 2'-deoxyribonucleoside 5'-triphosphate + ADP. It catalyses the reaction a ribonucleoside 5'-diphosphate + ATP = a ribonucleoside 5'-triphosphate + ADP. Functionally, major role in the synthesis of nucleoside triphosphates other than ATP. The ATP gamma phosphate is transferred to the NDP beta phosphate via a ping-pong mechanism, using a phosphorylated active-site intermediate. The polypeptide is Nucleoside diphosphate kinase (Mycobacteroides abscessus (strain ATCC 19977 / DSM 44196 / CCUG 20993 / CIP 104536 / JCM 13569 / NCTC 13031 / TMC 1543 / L948) (Mycobacterium abscessus)).